A 2193-amino-acid chain; its full sequence is MGAQVSTQKTGAHEASLSATGSSIIHYTNINYYKDSASNSANRQDFTQDPSKFTEPVKDVMIKSLPALNSPSAEECGFSDRVRSITIGNSTITTQECANVVVAYGRWPTYLRDDEATAEDQPTQPDVATCRFYTLESVQWQENSAGWWWKFPDALSNMGLFGQNMLYHYLGRAGYTIHVQCNASKFHQGCLLVVCVPEAEMGCSKVDGVVNAQGLSKGEIPIEFERTSTTAEVGVVQKAVYNAGMGIGVGNLTIFPHQWINLRTNNSATIVIPYINCVPMDNMFRHNNFTLMVIPFAPLKSSGGTNYVPVTITVAPMDAEYNGLRLAGHQGLPTMNTPGSTQFLTSDDFQSPCAMPEFDVTPCMDIPGKVHNLMEIAEVDIGVPVNNTSTHMEGTDAFQIKVTAGNVQDKNAIFSFQLNPGNSTVLRRTLLGEILNYYAHWSGSIKLTFLFCGSAMATGKLLLAYSPPGASVPKARRDAMLGTHVIWDVGLQSSCVLCVPWISQTHYRLVAQDEYTSAGYITCWYQTNIVVPPETPSDCVVLCFVSACNDFSVRMLKDTPFIEQTTELQSDVREAVEGAIGRVADTIRSGPSNSEAVPALTAAETGHTSQVVPSDTMQTRHVKNYHSRSESTIENFLCRSACVRMAKYEARGNLKALTLDAWEISVRDMVQLRRKCEMFTYLRFDVEVTFVITSYQRQGTSSIQICPYDAHQIMYIPPGGPIPKKVDGYEWQTSTNPSIFWTEGNAPPRMSIPFISIGNAYSSFYDGWSHFDSKGAYGFNTLNKMGHIYCRHVNKETPTKVTSYIRIYFKPKHVRAWVPRPPRLCQYMNKANVNFEATAVTDTRDTINTVPLSTHGVSRGAYGHQSGARYVGNYRIVNRHLATHTDWQKCVWEDYNRDLLVSTTTAHGCDTIARCQCTTGVYFCASKNKHYPVSFEGPGLVEVQASEYYPKRYQSHVLLAAGFSEPGDCGGILRCEHGVIGIVTMGGEGVVGFADVRDLLWLEDDAMEQGVKDYVEQLGNAFGSGFTNQICEQVNLLKESLVGQDSILEKSLKALVKIISALVIVVRNHDDLITVTAVLALIGCTTSPWRWLKQKVSQYYGIPMAERQNNRWLKKFTEMTNACKGMEWIAIKIQKFIEWLKIKILPEVKEKHEFLNRLKQLPLLESQIATIEQSAPSQGDQEQLFSNIQYFAHYCRKYAPLYAAEAKRVFSLEKKMSNYIQFKSKCRIEPVCLLLHGSPGAGKSVATNLIGRSLAEKLNSSVYSLPPDPDHFDGYKQQAVVIMDDLCQNPDGKDVSLFCQMVSSVDFVPPMAALEEKGILFTSPFVLASTNAGSINAPTVSDSRALARRFHFDMNIEVISMYSQNGKINMPMSVKTCDEECCPVNFKKCCPLVCGKAIQFIDRRTQVRYSLDMLVTEMFREYNHRHSVGTTLEALFQGPPIYREIKISVAPETPPPPAIADLLKSVDSEAVREYCKEKGWLVPEVNSTLQIEKHVSRAFICLQALTTFVSVAGIIYIIYKLFAGFQGAYTGMPNQKPRVPTLRQAKVQGPAFEFAVAMMKRNSSTVKTEYGEFTMLGIYDRWAVLPRHAKPGPTILMNDQEVGVLDAKELVDKDGTNLELTLLKLNRNEKFRDIRGFLAKEEVEVNEAVLAINTSKFPNMYIPVGQVTDYGFLNLGGTPTKRMLMYNFPTRAGQCGGVLMSTGKVLGIHVGGNGHQGFSAALLKHYFNDEQGEIEFIESSKEAGFPVINTPSKTKLEPSVFHQVFEGNKEPAVLRNGDPRLKANFEEALFSKYIGNVNTHVDEYMLEAVDHYAGQLATLDISTEPMRLEDAVYGTEGLEALDLTTSAGYPYVALGIKKRDILSKKTRDLTKLKECMDKYGLNLPMVTYVKDELRSAEKVAKGKSRLIEASSLNDSVAMRQTFGNLYKTFHLNPGIVTGSASGCDPDLFWSKIPVMLDGHLIAFDYSGYDASLSPVWFACLKLLLEKLGYSHKETNYIDYLCNSHHLYRDKHYFVRGGMPSGCSGTSIFNSMINNIIIRTLMLKVYKGIDLDQFRMIAYGDDVIASYPWPIDASLLAEAGKDYGLIMTPADKGECFNEVTWTNVTFLKRYFRADEQYPFLVHPVMPMKDIHESIRWTKDPKNTQDHVRSLCLLAWHNGEREYEEFIRKIRSVPVGRCLTLPAFSTLRRKWLDSF.

Gly2 carries the N-myristoyl glycine; by host lipid modification. At Gly2 to Gln1503 the chain is on the cytoplasmic side. Residues Glu567–Val583 are amphipathic alpha-helix. Catalysis depends on for protease 2A activity residues His880 and Asp898. Zn(2+) contacts are provided by Cys915 and Cys917. The active-site For protease 2A activity is the Cys969. Residues Cys975 and His977 each coordinate Zn(2+). The interval Asn1109–Gln1181 is membrane-binding. Residues Asn1109–Thr1247 are oligomerization. Positions Ala1130–Gln1134 are RNA-binding. In terms of domain architecture, SF3 helicase spans Glu1213 to Asn1369. Residues Cys1377, Cys1389, and Cys1394 each coordinate Zn(2+). Residues Cys1377–Cys1394 form a C4-type; degenerate zinc finger. Positions Glu1421 to Val1428 are RNA-binding. Residues Leu1432–Gln1437 form an oligomerization region. An intramembrane segment occupies Ala1504–Tyr1519. Topologically, residues Lys1520–Phe2193 are cytoplasmic. An O-(5'-phospho-RNA)-tyrosine modification is found at Tyr1529. One can recognise a Peptidase C3 domain in the interval Gly1549–Phe1727. Residues His1588, Glu1619, and Cys1695 each act as for protease 3C activity in the active site. The RdRp catalytic domain maps to Gly1958–Leu2074. Asp1964 and Asp2060 together coordinate Mg(2+).

It belongs to the picornaviruses polyprotein family. Interacts with capsid protein VP1 and capsid protein VP3 to form heterotrimeric protomers. In terms of assembly, interacts with capsid protein VP0, and capsid protein VP3 to form heterotrimeric protomers. Five protomers subsequently associate to form pentamers which serve as building blocks for the capsid. Interacts with capsid protein VP2, capsid protein VP3 and capsid protein VP4 following cleavage of capsid protein VP0. As to quaternary structure, interacts with capsid protein VP1 and capsid protein VP3 in the mature capsid. Interacts with capsid protein VP0 and capsid protein VP1 to form heterotrimeric protomers. Five protomers subsequently associate to form pentamers which serve as building blocks for the capsid. Interacts with capsid protein VP4 in the mature capsid. Interacts with protein 2C; this interaction may be important for virion morphogenesis. In terms of assembly, interacts with capsid protein VP1 and capsid protein VP3. As to quaternary structure, homodimer. Homohexamer; forms a hexameric ring structure with 6-fold symmetry characteristic of AAA+ ATPases. Interacts (via N-terminus) with host RTN3 (via reticulon domain); this interaction is important for viral replication. Interacts with capsid protein VP3; this interaction may be important for virion morphogenesis. In terms of assembly, interacts with protein 3CD. As to quaternary structure, homodimer. Interacts with host GBF1. Interacts (via GOLD domain) with host ACBD3 (via GOLD domain); this interaction allows the formation of a viral protein 3A/ACBD3 heterotetramer with a 2:2 stoichiometry, which will stimulate the recruitment of host PI4KB in order to synthesize PI4P at the viral RNA replication sites. Interacts with RNA-directed RNA polymerase. In terms of assembly, interacts with protein 3AB and with RNA-directed RNA polymerase. As to quaternary structure, interacts with Viral protein genome-linked and with protein 3CD. Mg(2+) is required as a cofactor. Post-translationally, specific enzymatic cleavages in vivo by the viral proteases yield processing intermediates and the mature proteins. In terms of processing, myristoylation is required for the formation of pentamers during virus assembly. Further assembly of 12 pentamers and a molecule of genomic RNA generates the provirion. During virion maturation, immature virions are rendered infectious following cleavage of VP0 into VP4 and VP2. This maturation seems to be an autocatalytic event triggered by the presence of RNA in the capsid and it is followed by a conformational change infectious virion. Post-translationally, myristoylation is required during RNA encapsidation and formation of the mature virus particle. In terms of processing, VPg is uridylylated by the polymerase into VPg-pUpU. This acts as a nucleotide-peptide primer for the genomic RNA replication.

It localises to the virion. The protein resides in the host cytoplasm. Its subcellular location is the host cytoplasmic vesicle membrane. It is found in the host nucleus. The catalysed reaction is a ribonucleoside 5'-triphosphate + H2O = a ribonucleoside 5'-diphosphate + phosphate + H(+). The enzyme catalyses Selective cleavage of Tyr-|-Gly bond in the picornavirus polyprotein.. It carries out the reaction RNA(n) + a ribonucleoside 5'-triphosphate = RNA(n+1) + diphosphate. It catalyses the reaction Selective cleavage of Gln-|-Gly bond in the poliovirus polyprotein. In other picornavirus reactions Glu may be substituted for Gln, and Ser or Thr for Gly.. Replication or transcription is subject to high level of random mutations by the nucleotide analog ribavirin. Forms an icosahedral capsid of pseudo T=3 symmetry with capsid proteins VP2 and VP3. The capsid is 300 Angstroms in diameter, composed of 60 copies of each capsid protein and enclosing the viral positive strand RNA genome. Capsid protein VP1 mainly forms the vertices of the capsid. Capsid protein VP1 interacts with host cell receptor to provide virion attachment to target host cells. This attachment induces virion internalization. Tyrosine kinases are probably involved in the entry process. After binding to its receptor, the capsid undergoes conformational changes. Capsid protein VP1 N-terminus (that contains an amphipathic alpha-helix) and capsid protein VP4 are externalized. Together, they shape a pore in the host membrane through which viral genome is translocated to host cell cytoplasm. In terms of biological role, forms an icosahedral capsid of pseudo T=3 symmetry with capsid proteins VP2 and VP3. The capsid is 300 Angstroms in diameter, composed of 60 copies of each capsid protein and enclosing the viral positive strand RNA genome. Functionally, lies on the inner surface of the capsid shell. After binding to the host receptor, the capsid undergoes conformational changes. Capsid protein VP4 is released, Capsid protein VP1 N-terminus is externalized, and together, they shape a pore in the host membrane through which the viral genome is translocated into the host cell cytoplasm. Its function is as follows. Component of immature procapsids, which is cleaved into capsid proteins VP4 and VP2 after maturation. Allows the capsid to remain inactive before the maturation step. Cysteine protease that cleaves viral polyprotein and specific host proteins. It is responsible for the autocatalytic cleavage between the P1 and P2 regions, which is the first cleavage occurring in the polyprotein. Also cleaves the host translation initiation factor EIF4G1, in order to shut down the capped cellular mRNA translation. Inhibits the host nucleus-cytoplasm protein and RNA trafficking by cleaving host members of the nuclear pores. Counteracts stress granule formation probably by antagonizing its assembly or promoting its dissassembly. In terms of biological role, plays an essential role in the virus replication cycle by acting as a viroporin. Creates a pore in the host endoplasmic reticulum and as a consequence releases Ca2+ in the cytoplasm of infected cell. In turn, high levels of cytoplasmic calcium may trigger membrane trafficking and transport of viral ER-associated proteins to viroplasms, sites of viral genome replication. Functionally, induces and associates with structural rearrangements of intracellular membranes. Displays RNA-binding, nucleotide binding and NTPase activities. May play a role in virion morphogenesis and viral RNA encapsidation by interacting with the capsid protein VP3. Its function is as follows. Localizes the viral replication complex to the surface of membranous vesicles. Together with protein 3CD binds the Cis-Active RNA Element (CRE) which is involved in RNA synthesis initiation. Acts as a cofactor to stimulate the activity of 3D polymerase, maybe through a nucleid acid chaperone activity. Localizes the viral replication complex to the surface of membranous vesicles. It inhibits host cell endoplasmic reticulum-to-Golgi apparatus transport and causes the disassembly of the Golgi complex, possibly through GBF1 interaction. This would result in depletion of MHC, trail receptors and IFN receptors at the host cell surface. Plays an essential role in viral RNA replication by recruiting ACBD3 and PI4KB at the viral replication sites, thereby allowing the formation of the rearranged membranous structures where viral replication takes place. In terms of biological role, acts as a primer for viral RNA replication and remains covalently bound to viral genomic RNA. VPg is uridylylated prior to priming replication into VPg-pUpU. The oriI viral genomic sequence may act as a template for this. The VPg-pUpU is then used as primer on the genomic RNA poly(A) by the RNA-dependent RNA polymerase to replicate the viral genome. During genome replication, the VPg-RNA linkage is removed by the host TDP2, thereby accelerating replication. During the late stage of the replication cycle, host TDP2 is excluded from sites of viral RNA synthesis and encapsidation, allowing for the generation of progeny virions. Functionally, involved in the viral replication complex and viral polypeptide maturation. It exhibits protease activity with a specificity and catalytic efficiency that is different from protease 3C. Protein 3CD lacks polymerase activity. Protein 3CD binds to the 5'UTR of the viral genome. Its function is as follows. Replicates the viral genomic RNA on the surface of intracellular membranes. May form linear arrays of subunits that propagate along a strong head-to-tail interaction called interface-I. Covalently attaches UMP to a tyrosine of VPg, which is used to prime RNA synthesis. The positive stranded RNA genome is first replicated at virus induced membranous vesicles, creating a dsRNA genomic replication form. This dsRNA is then used as template to synthesize positive stranded RNA genomes. ss(+)RNA genomes are either translated, replicated or encapsidated. Major viral protease that mediates proteolytic processing of the polyprotein. Cleaves host EIF5B, contributing to host translation shutoff. Also cleaves host PABPC1, contributing to host translation shutoff. Cleaves host NLRP1, triggers host N-glycine-mediated degradation of the autoinhibitory NLRP1 N-terminal fragment. This chain is Genome polyprotein, found in Echovirus 9 (strain Hill).